We begin with the raw amino-acid sequence, 538 residues long: Lipid scramblase CLPTM1L (538 aa).

The Cytoplasmic segment spans residues 1-9; sequence MFPKTSFTS. A helical membrane pass occupies residues 10 to 30; that stretch reads LIVGVFLLYVLHTCWVMYGIV. The Extracellular segment spans residues 31–284; it reads YTKPCEKRRA…IKGIFVDTNL (254 aa). N-linked (GlcNAc...) asparagine glycosylation is found at asparagine 90 and asparagine 100. The segment at 140 to 166 is disordered; the sequence is ISLITGQDEPEKPDQQKQSSDSELDRP. The N-linked (GlcNAc...) asparagine glycan is linked to asparagine 229. A helical membrane pass occupies residues 285-305; that stretch reads YFLALTFFVAAFHLLFDFLAF. Residues 306-324 lie on the Cytoplasmic side of the membrane; the sequence is KNDISFWKHKKSMVGMSSK. Residues 325–341 traverse the membrane as a helical segment; sequence AVLWRCFSTIVIFLYLL. The Extracellular portion of the chain corresponds to 342–402; the sequence is DEQTSLLVLV…TEEYDTLAMK (61 aa). Residues 403-423 traverse the membrane as a helical segment; the sequence is YLSYLLYPLCVGGAVYALVFV. At 424 to 428 the chain is on the cytoplasmic side; sequence KYKSW. The helical transmembrane segment at 429-449 threads the bilayer; it reads YSWIINSLVNGVYAFGFLFML. At 450–538 the chain is on the extracellular side; that stretch reads PQLFVNYKLK…EKPKGKSHED (89 aa).

The protein belongs to the CLPTM1 family.

The protein localises to the endoplasmic reticulum membrane. It carries out the reaction a 6-(alpha-D-glucosaminyl)-1-(1,2-diacyl-sn-glycero-3-phospho)-1D-myo-inositol(in) = a 6-(alpha-D-glucosaminyl)-1-(1,2-diacyl-sn-glycero-3-phospho)-1D-myo-inositol(out). The catalysed reaction is 6-(alpha-D-glucosaminyl)-(1-octadecanoyl,2-(9Z)-octadecenoyl-sn-glycero-3-phospho)-1D-myo-inositol(in) = 6-(alpha-D-glucosaminyl)-(1-octadecanoyl,2-(9Z)-octadecenoyl-sn-glycero-3-phospho)-1D-myo-inositol(out). It catalyses the reaction a 1,2-diacyl-sn-glycero-3-phospho-(1D-myo-inositol)(in) = a 1,2-diacyl-sn-glycero-3-phospho-(1D-myo-inositol)(out). The enzyme catalyses a 1,2-diacyl-sn-glycero-3-phosphocholine(in) = a 1,2-diacyl-sn-glycero-3-phosphocholine(out). It carries out the reaction a 1,2-diacyl-sn-glycero-3-phosphoethanolamine(in) = a 1,2-diacyl-sn-glycero-3-phosphoethanolamine(out). In terms of biological role, scramblase that mediates the translocation of glucosaminylphosphatidylinositol (alpha-D-GlcN-(1-6)-(1,2-diacyl-sn-glycero-3-phospho)-1D-myo-inositol, GlcN-PI) across the endoplasmic reticulum (ER) membrane, from the cytosolic leaflet to the luminal leaflet of the ER membrane, where it participates in the biosynthesis of glycosylphosphatidylinositol (GPI). GPI is a lipid glycoconjugate involved in post-translational modification of proteins. Can also translocate 1,2-diacyl-sn-glycero-3-phospho-(1D-myo-inositol) (phosphatidylinositol or PI), as well as several other phospholipids (1,2-diacyl-sn-glycero-3-phosphocholine, 1,2-diacyl-sn-glycero-3-phosphoethanolamine), and N-acetylglucosaminylphosphatidylinositol (GlcNAc-PI) in vitro. This chain is Lipid scramblase CLPTM1L (clptm1l), found in Danio rerio (Zebrafish).